A 250-amino-acid polypeptide reads, in one-letter code: MLIDWFTVFAQILNFVILLGLLRWFLYKPILQVMAKRQAQLAEQWQTATDLQAQAHQALEQYHQEQQSLQAQRASFLAAARAAADEERQRQLLTLREDIQAQREAWEADLHQEQRAFFHTLRQQVSQQVVAIARQALRDLANATLEQQVVARFCEQLQHLSPAQRQQINHLETPPEAVFIRTAFPLDVTHQAQIKQSLATTLELDGTPIHFVTVPELGCGIELKLAGQEIVWGLDPYLDQLEQTLAIATR.

A helical transmembrane segment spans residues leucine 2 to leucine 22.

The protein belongs to the ATPase B chain family. In terms of assembly, F-type ATPases have 2 components, F(1) - the catalytic core - and F(0) - the membrane proton channel. F(1) has five subunits: alpha(3), beta(3), gamma(1), delta(1), epsilon(1). F(0) has four main subunits: a(1), b(1), b'(1) and c(10-14). The alpha and beta chains form an alternating ring which encloses part of the gamma chain. F(1) is attached to F(0) by a central stalk formed by the gamma and epsilon chains, while a peripheral stalk is formed by the delta, b and b' chains.

The protein resides in the cellular thylakoid membrane. F(1)F(0) ATP synthase produces ATP from ADP in the presence of a proton or sodium gradient. F-type ATPases consist of two structural domains, F(1) containing the extramembraneous catalytic core and F(0) containing the membrane proton channel, linked together by a central stalk and a peripheral stalk. During catalysis, ATP synthesis in the catalytic domain of F(1) is coupled via a rotary mechanism of the central stalk subunits to proton translocation. Its function is as follows. Component of the F(0) channel, it forms part of the peripheral stalk, linking F(1) to F(0). This Picosynechococcus sp. (strain ATCC 27264 / PCC 7002 / PR-6) (Agmenellum quadruplicatum) protein is ATP synthase subunit b 2.